We begin with the raw amino-acid sequence, 208 residues long: Small ribosomal subunit protein uS4 (208 aa).

Positions 98-159 (LRLDNVAYRL…AARTHIRIAA (62 aa)) constitute an S4 RNA-binding domain.

This sequence belongs to the universal ribosomal protein uS4 family. As to quaternary structure, part of the 30S ribosomal subunit. Contacts protein S5. The interaction surface between S4 and S5 is involved in control of translational fidelity.

Functionally, one of the primary rRNA binding proteins, it binds directly to 16S rRNA where it nucleates assembly of the body of the 30S subunit. In terms of biological role, with S5 and S12 plays an important role in translational accuracy. The sequence is that of Small ribosomal subunit protein uS4 from Acidithiobacillus ferrooxidans (strain ATCC 23270 / DSM 14882 / CIP 104768 / NCIMB 8455) (Ferrobacillus ferrooxidans (strain ATCC 23270)).